The chain runs to 207 residues: Glycerol-3-phosphate acyltransferase 1 (207 aa).

A run of 5 helical transmembrane segments spans residues 3-23 (YVIA…QIVG), 53-73 (IVVA…LLIL), 85-105 (HIYI…PITM), 127-147 (IALI…YLAV), and 154-174 (ISFL…IVVG).

The protein belongs to the PlsY family. Probably interacts with PlsX.

The protein localises to the cell membrane. It carries out the reaction an acyl phosphate + sn-glycerol 3-phosphate = a 1-acyl-sn-glycero-3-phosphate + phosphate. The protein operates within lipid metabolism; phospholipid metabolism. In terms of biological role, catalyzes the transfer of an acyl group from acyl-phosphate (acyl-PO(4)) to glycerol-3-phosphate (G3P) to form lysophosphatidic acid (LPA). This enzyme utilizes acyl-phosphate as fatty acyl donor, but not acyl-CoA or acyl-ACP. The protein is Glycerol-3-phosphate acyltransferase 1 of Oceanobacillus iheyensis (strain DSM 14371 / CIP 107618 / JCM 11309 / KCTC 3954 / HTE831).